The sequence spans 312 residues: Beta-lactamase regulatory protein BlaB (312 aa).

The chain is Beta-lactamase regulatory protein BlaB (blaB) from Streptomyces cacaoi.